A 328-amino-acid chain; its full sequence is DNA-directed RNA polymerase subunit alpha 1 (328 aa).

The segment at 1 to 234 is alpha N-terminal domain (alpha-NTD); sequence MQGFVKDFLK…GQLDEFVDER (234 aa). The tract at residues 248–328 is alpha C-terminal domain (alpha-CTD); the sequence is FDPILLRPVN…NWPPASLIED (81 aa).

It belongs to the RNA polymerase alpha chain family. Homodimer. The RNAP catalytic core consists of 2 alpha, 1 beta, 1 beta' and 1 omega subunit. When a sigma factor is associated with the core the holoenzyme is formed, which can initiate transcription.

It catalyses the reaction RNA(n) + a ribonucleoside 5'-triphosphate = RNA(n+1) + diphosphate. Its function is as follows. DNA-dependent RNA polymerase catalyzes the transcription of DNA into RNA using the four ribonucleoside triphosphates as substrates. This chain is DNA-directed RNA polymerase subunit alpha 1, found in Psychromonas ingrahamii (strain DSM 17664 / CCUG 51855 / 37).